A 500-amino-acid polypeptide reads, in one-letter code: Hexose transporter 1 (500 aa).

Topologically, residues Met-1 to Ser-25 are cytoplasmic. A helical membrane pass occupies residues Leu-26–Leu-46. Topologically, residues Asn-47–Ser-75 are extracellular. A disulfide bond links Cys-60 and Cys-67. The chain crosses the membrane as a helical span at residues Phe-76–Val-96. Topologically, residues Gln-97–Arg-101 are cytoplasmic. Residues Phe-102 to His-122 traverse the membrane as a helical segment. Residues His-123–Arg-131 lie on the Extracellular side of the membrane. The chain crosses the membrane as a helical span at residues Leu-132–Met-152. The Cytoplasmic segment spans residues Thr-153 to Gln-166. Gln-166 serves as a coordination point for alpha-D-glucose. Residue Gln-166 coordinates beta-D-glucose. The chain crosses the membrane as a helical span at residues Leu-167–Pro-187. At Glu-188–Arg-203 the chain is on the extracellular side. A helical transmembrane segment spans residues Leu-204 to Phe-224. Residues Lys-225–Tyr-289 lie on the Cytoplasmic side of the membrane. Residues Val-290 to Val-310 traverse the membrane as a helical segment. Alpha-D-glucose-binding residues include Gln-301, Gln-302, and Asn-307. A beta-D-glucose-binding site is contributed by Gln-301. Beta-D-glucose is bound at residue Asn-307. The Extracellular segment spans residues Ser-311–Thr-327. A helical membrane pass occupies residues Thr-328 to Val-348. A beta-D-glucose-binding site is contributed by Asn-337. The Cytoplasmic portion of the chain corresponds to Glu-349 to Leu-356. Residues Leu-357 to Ile-377 traverse the membrane as a helical segment. Residues Asn-378–Ser-390 are Extracellular-facing. The chain crosses the membrane as a helical span at residues Ala-391–Leu-411. Alpha-D-glucose is bound at residue Trp-408. The Cytoplasmic segment spans residues His-412–Ser-425. The chain crosses the membrane as a helical span at residues Leu-426–Ile-446. Topologically, residues Lys-447–Thr-451 are extracellular. The chain crosses the membrane as a helical span at residues Ile-452–Ile-472. The Cytoplasmic segment spans residues Lys-473–Val-500.

Belongs to the major facilitator superfamily. Sugar transporter (TC 2.A.1.1) family. Homodimer.

Its subcellular location is the cell membrane. The catalysed reaction is D-glucose(out) = D-glucose(in). The enzyme catalyses D-fructose(out) = D-fructose(in). It catalyses the reaction D-galactose(in) = D-galactose(out). It carries out the reaction D-mannose(out) = D-mannose(in). The catalysed reaction is D-glucosamine(out) = D-glucosamine(in). The enzyme catalyses D-xylose(out) = D-xylose(in). Inhibited by cytochalasin B. In terms of biological role, sodium-independent facilitative hexose transporter. Can transport D-glucose and D-fructose. Can transport D-mannose, D-galactose, D-xylose and D-glucosamine. This chain is Hexose transporter 1, found in Plasmodium knowlesi.